Consider the following 438-residue polypeptide: Dol-P-Man:Man(5)GlcNAc(2)-PP-Dol alpha-1,3-mannosyltransferase (438 aa).

Ser13 carries the phosphoserine modification. 11 helical membrane passes run 41–61, 95–115, 123–143, 149–169, 172–192, 203–223, 231–251, 289–309, 332–352, 356–376, and 407–427; these read YTLL…FWVI, TGPL…YYAT, MAQN…FLIY, VPPF…SIFV, LFND…LLAQ, LAVS…FLLL, ALPK…PFLL, FHLA…LCRW, PLTP…GICF, LHYQ…WAMP, and AALH…PQPF.

It belongs to the glycosyltransferase ALG3 family.

It is found in the endoplasmic reticulum membrane. The enzyme catalyses an alpha-D-Man-(1-&gt;2)-alpha-D-Man-(1-&gt;2)-alpha-D-Man-(1-&gt;3)-[alpha-D-Man-(1-&gt;6)]-beta-D-Man-(1-&gt;4)-beta-D-GlcNAc-(1-&gt;4)-alpha-D-GlcNAc-diphospho-di-trans,poly-cis-dolichol + a di-trans,poly-cis-dolichyl beta-D-mannosyl phosphate = an alpha-D-Man-(1-&gt;2)-alpha-D-Man-(1-&gt;2)-alpha-D-Man-(1-&gt;3)-[alpha-D-Man-(1-&gt;3)-alpha-D-Man-(1-&gt;6)]-beta-D-Man-(1-&gt;4)-beta-D-GlcNAc-(1-&gt;4)-alpha-D-GlcNAc-diphospho-di-trans,poly-cis-dolichol + a di-trans,poly-cis-dolichyl phosphate + H(+). It participates in protein modification; protein glycosylation. Functionally, dol-P-Man:Man(5)GlcNAc(2)-PP-Dol alpha-1,3-mannosyltransferase that operates in the biosynthetic pathway of dolichol-linked oligosaccharides, the glycan precursors employed in protein asparagine (N)-glycosylation. The assembly of dolichol-linked oligosaccharides begins on the cytosolic side of the endoplasmic reticulum membrane and finishes in its lumen. The sequential addition of sugars to dolichol pyrophosphate produces dolichol-linked oligosaccharides containing fourteen sugars, including two GlcNAcs, nine mannoses and three glucoses. Once assembled, the oligosaccharide is transferred from the lipid to nascent proteins by oligosaccharyltransferases. In the lumen of the endoplasmic reticulum, adds the first dolichyl beta-D-mannosyl phosphate derived mannose in an alpha-1,3 linkage to Man(5)GlcNAc(2)-PP-dolichol to produce Man(6)GlcNAc(2)-PP-dolichol. Man(6)GlcNAc(2)-PP-dolichol is a substrate for ALG9, the following enzyme in the biosynthetic pathway. The sequence is that of Dol-P-Man:Man(5)GlcNAc(2)-PP-Dol alpha-1,3-mannosyltransferase from Homo sapiens (Human).